The sequence spans 751 residues: Catalase-peroxidase (751 aa).

A disordered region spans residues 1–24 (MADKCPFHNQAPKPNVAGSGTQNR). A cross-link (tryptophyl-tyrosyl-methioninium (Trp-Tyr) (with M-267)) is located at residues 95–241 (WHSAGTYRTF…LAAAHMGLIY (147 aa)). The active-site Proton acceptor is the H96. A cross-link (tryptophyl-tyrosyl-methioninium (Tyr-Met) (with W-95)) is located at residues 241 to 267 (YVNPEGPDGNPDPVAAARDIRTTFARM). H282 serves as a coordination point for heme b.

This sequence belongs to the peroxidase family. Peroxidase/catalase subfamily. Homodimer or homotetramer. Heme b is required as a cofactor. In terms of processing, formation of the three residue Trp-Tyr-Met cross-link is important for the catalase, but not the peroxidase activity of the enzyme.

The protein localises to the cytoplasm. The enzyme catalyses H2O2 + AH2 = A + 2 H2O. It catalyses the reaction 2 H2O2 = O2 + 2 H2O. Functionally, bifunctional enzyme with both catalase and broad-spectrum peroxidase activity. The protein is Catalase-peroxidase of Aspergillus oryzae (strain ATCC 42149 / RIB 40) (Yellow koji mold).